Reading from the N-terminus, the 193-residue chain is Acyl carrier protein phosphodiesterase (193 aa).

Belongs to the AcpH family.

It carries out the reaction holo-[ACP] + H2O = apo-[ACP] + (R)-4'-phosphopantetheine + H(+). Functionally, converts holo-ACP to apo-ACP by hydrolytic cleavage of the phosphopantetheine prosthetic group from ACP. The polypeptide is Acyl carrier protein phosphodiesterase (Klebsiella pneumoniae (strain 342)).